A 479-amino-acid chain; its full sequence is Heparin cofactor 2 (479 aa).

Positions 1 to 23 (MKHPAYTLLLSLIMSMCAGSKGL) are cleaved as a signal peptide. The N-linked (GlcNAc...) asparagine glycan is linked to asparagine 31. Repeat copies occupy residues 55–65 (GEEDDDYLDLE) and 69–79 (SEDDDYIYVVD). The tract at residues 55 to 79 (GEEDDDYLDLEKLLSEDDDYIYVVD) is 2 X 11 AA approximate repeats, Asp/Glu-rich (acidic) (hirudin-like). 2 positions are modified to sulfotyrosine: tyrosine 61 and tyrosine 74. Asparagine 168 is a glycosylation site (N-linked (GlcNAc...) asparagine). The segment at 172 to 192 (KYEVTTIHNLFRKLTHRLFRR) is glycosaminoglycan-binding site. Residues asparagine 367 and asparagine 403 are each glycosylated (N-linked (GlcNAc...) asparagine).

Belongs to the serpin family. In terms of processing, different composition of the N-linked oligosaccharides appears to yield a 68-kDa and a 72-kDa form.

Functionally, thrombin inhibitor activated by the glycosaminoglycans, heparin or dermatan sulfate. In the presence of the latter, HC-II becomes the predominant thrombin inhibitor in place of antithrombin III (AT). This Rattus norvegicus (Rat) protein is Heparin cofactor 2 (Serpind1).